The chain runs to 341 residues: Elongation factor Ts (341 aa).

The involved in Mg(2+) ion dislocation from EF-Tu stretch occupies residues 80 to 83 (TDFV).

Belongs to the EF-Ts family.

It is found in the cytoplasm. Functionally, associates with the EF-Tu.GDP complex and induces the exchange of GDP to GTP. It remains bound to the aminoacyl-tRNA.EF-Tu.GTP complex up to the GTP hydrolysis stage on the ribosome. This chain is Elongation factor Ts, found in Lactobacillus acidophilus (strain ATCC 700396 / NCK56 / N2 / NCFM).